Consider the following 142-residue polypeptide: Baculoviral IAP repeat-containing protein 5 (142 aa).

One copy of the BIR repeat lies at 18–88 (RIYTFKNWPF…KHSPGCAFLT (71 aa)). An N6-acetyllysine modification is found at lysine 23. Residue threonine 34 is modified to Phosphothreonine; by CDK1 and CDK15. A Phosphothreonine modification is found at threonine 48. Cysteine 57, cysteine 60, histidine 77, and cysteine 84 together coordinate Zn(2+). 4 positions are modified to N6-acetyllysine: lysine 90, lysine 110, lysine 112, and lysine 115. Phosphothreonine; by AURKB is present on threonine 117.

Belongs to the IAP family. In terms of assembly, monomer or homodimer. Exists as a homodimer in the apo state and as a monomer in the CPC-bound state. The monomer protects cells against apoptosis more efficiently than the dimer. Only the dimeric form is capable of enhancing tubulin stability in cells. When phosphorylated, interacts with LAMTOR5/HBXIP; the resulting complex binds pro-CASP9, as well as active CASP9, but much less efficiently. Component of the chromosomal passenger complex (CPC) composed of at least BIRC5/survivin, CDCA8/borealin, INCENP, AURKB or AURKC; in the complex forms a triple-helix bundle-based subcomplex with INCENP and CDCA8. Interacts with JTB. Interacts (via BIR domain) with histone H3 phosphorylated at 'Thr-3' (H3pT3). Interacts with EVI5. Interacts with GTP-bound RAN in both the S and M phases of the cell cycle. Interacts with USP9X. Interacts with tubulin. Interacts with BIRC2/c-IAP1. The monomeric form interacts with XIAP/BIRC4. Both the dimeric and monomeric form can interact with DIABLO/SMAC. Interacts with BIRC6/bruce. Interacts with FBXL7; this interaction facilitates the polyubiquitination and subsequent proteasomal degradation of BIRC5 by the SCF(FBXL7) E3 ubiquitin-protein ligase complex. Post-translationally, ubiquitinated by the Cul9-RING ubiquitin-protein ligase complex, leading to its degradation. Ubiquitination is required for centrosomal targeting. Deubiquitinated by USP35 or USP38; leading to stabilization. In terms of processing, in vitro phosphorylation at Thr-117 by AURKB prevents interaction with INCENP and localization to mitotic chromosomes. Phosphorylation at Thr-48 by CK2 is critical for its mitotic and anti-apoptotic activities. Phosphorylation at Thr-34 by CDK15 is critical for its anti-apoptotic activity.

The protein resides in the cytoplasm. Its subcellular location is the nucleus. It localises to the chromosome. It is found in the centromere. The protein localises to the cytoskeleton. The protein resides in the spindle. Its subcellular location is the kinetochore. It localises to the midbody. In terms of biological role, multitasking protein that has dual roles in promoting cell proliferation and preventing apoptosis. Component of a chromosome passage protein complex (CPC) which is essential for chromosome alignment and segregation during mitosis and cytokinesis. Acts as an important regulator of the localization of this complex; directs CPC movement to different locations from the inner centromere during prometaphase to midbody during cytokinesis and participates in the organization of the center spindle by associating with polymerized microtubules. Involved in the recruitment of CPC to centromeres during early mitosis via association with histone H3 phosphorylated at 'Thr-3' (H3pT3) during mitosis. The complex with RAN plays a role in mitotic spindle formation by serving as a physical scaffold to help deliver the RAN effector molecule TPX2 to microtubules. May counteract a default induction of apoptosis in G2/M phase. The acetylated form represses STAT3 transactivation of target gene promoters. May play a role in neoplasia. Inhibitor of CASP3 and CASP7. Essential for the maintenance of mitochondrial integrity and function. This Rattus norvegicus (Rat) protein is Baculoviral IAP repeat-containing protein 5 (Birc5).